The following is a 590-amino-acid chain: Type I inositol polyphosphate 5-phosphatase 1 (590 aa).

The tract at residues 47–73 is disordered; the sequence is DYSADSDDDYEDRSQEFDPISSGVTNP. A compositionally biased stretch (acidic residues) spans 48-57; that stretch reads YSADSDDDYE. At serine 60 the chain carries Phosphoserine. Catalytic stretches follow at residues 445–460 and 523–538; these read ERII…INLS and GKRR…WNGK.

This sequence belongs to the inositol polyphosphate 5-phosphatase family. As to expression, expressed ubiquitously.

The catalysed reaction is 1D-myo-inositol 1,4,5-trisphosphate + H2O = 1D-myo-inositol 1,4-bisphosphate + phosphate. The enzyme catalyses 1D-myo-inositol 1,3,4,5-tetrakisphosphate + H2O = 1D-myo-inositol 1,3,4-trisphosphate + phosphate. Has phosphatase activity toward Ins(1,4,5)P3 and Ins(1,3,4,5)P4, but not toward Ins(1,4)P2, Ins(1)P. Seems to be involved in the abscisic acid (ABA) signaling pathway. Could also be able to hydrolyze PtdIns(4,5)P2 and PtdIns(3,4,5)P3. This chain is Type I inositol polyphosphate 5-phosphatase 1, found in Arabidopsis thaliana (Mouse-ear cress).